Consider the following 542-residue polypeptide: MARYVFITGGVVSSLGKGIAAAALAALLQARGYRVRIRKLDPYLNVDPGTISPYQHGEVFVTDDGAETDLDLGHYERFTGRPANQQDNITTGRIYRNIIEKERRGDYLGATVQVIPHVTDEIKNFVLEGNEDYDFVLCEIGGTVGDIEAMPFLEAIRQLGNELPRGTAVYIHLTLMPYIPAAGELKTKPTQHSVKELRSIGIAPDILLVRADREIPESERRKLSLFCNVRESAVIQALDVATIYDVPIAYHKEGLDSEVLSAFGIDPAPKPRMDRWEEVSHRLHNPEGEVTIAVVGKYTGLKDAYKSLIEALHHGGLANKVKVNLDWIEAQVFESEDPAPYLEKVHGILVPGGFGERGAEGKILAAKFARERKVPYFGICFGMQMACIEAARNLVGIEDASSSEFGPTREPVVGLMTEWLKGNMLEKRAAAGDLGGTMRLGAYEAVLKPDSKIAQIYGSTDIHERHRHRYEVNIDYKDRLEAAGLNFAGMSPDGVLPETVEYADHPWFIGVQYHPELKSRPFEPHPLFASFIEAAIEQSRLV.

The interval 1–265 (MARYVFITGG…DSEVLSAFGI (265 aa)) is amidoligase domain. Ser-13 lines the CTP pocket. Ser-13 provides a ligand contact to UTP. ATP is bound at residue 14–19 (SLGKGI). Residue Tyr-54 participates in L-glutamine binding. Asp-71 is a binding site for ATP. Mg(2+) contacts are provided by Asp-71 and Glu-139. Residues 146-148 (DIE), 186-191 (KTKPTQ), and Lys-222 each bind CTP. Residues 186 to 191 (KTKPTQ) and Lys-222 contribute to the UTP site. Residues 291-541 (TIAVVGKYTG…IEAAIEQSRL (251 aa)) form the Glutamine amidotransferase type-1 domain. An L-glutamine-binding site is contributed by Gly-353. The active-site Nucleophile; for glutamine hydrolysis is the Cys-380. Residues 381–384 (FGMQ), Glu-404, and Arg-469 contribute to the L-glutamine site. Residues His-514 and Glu-516 contribute to the active site.

Belongs to the CTP synthase family. In terms of assembly, homotetramer.

The catalysed reaction is UTP + L-glutamine + ATP + H2O = CTP + L-glutamate + ADP + phosphate + 2 H(+). The enzyme catalyses L-glutamine + H2O = L-glutamate + NH4(+). It catalyses the reaction UTP + NH4(+) + ATP = CTP + ADP + phosphate + 2 H(+). The protein operates within pyrimidine metabolism; CTP biosynthesis via de novo pathway; CTP from UDP: step 2/2. With respect to regulation, allosterically activated by GTP, when glutamine is the substrate; GTP has no effect on the reaction when ammonia is the substrate. The allosteric effector GTP functions by stabilizing the protein conformation that binds the tetrahedral intermediate(s) formed during glutamine hydrolysis. Inhibited by the product CTP, via allosteric rather than competitive inhibition. In terms of biological role, catalyzes the ATP-dependent amination of UTP to CTP with either L-glutamine or ammonia as the source of nitrogen. Regulates intracellular CTP levels through interactions with the four ribonucleotide triphosphates. This chain is CTP synthase, found in Brucella canis (strain ATCC 23365 / NCTC 10854 / RM-666).